Here is a 210-residue protein sequence, read N- to C-terminus: Hydrogenase expression/formation protein HupD (210 aa).

Glutamate 22, aspartate 68, and histidine 99 together coordinate Ni(2+).

This sequence belongs to the peptidase A31 family.

Its function is as follows. Not known. Could be involved in the processing of hydrogenase. The polypeptide is Hydrogenase expression/formation protein HupD (hupD) (Rhodobacter capsulatus (Rhodopseudomonas capsulata)).